Consider the following 460-residue polypeptide: Probable lipase C14C8.15 (460 aa).

Over 1 to 16 (MTLNGNIMKYCLEKGE) the chain is Cytoplasmic. A helical; Signal-anchor for type II membrane protein membrane pass occupies residues 17–37 (ILISFLLIALESMFRICTVIL). The Lumenal segment spans residues 38–460 (PSPLRNWFYE…LVDGVMNHTI (423 aa)). Serine 214 (nucleophile) is an active-site residue. N-linked (GlcNAc...) asparagine glycosylation occurs at asparagine 308. Active-site charge relay system residues include aspartate 382 and histidine 408. An N-linked (GlcNAc...) asparagine glycan is attached at asparagine 457.

Belongs to the AB hydrolase superfamily. Lipase family.

The protein localises to the golgi apparatus. The protein resides in the membrane. Its function is as follows. Probable lipase. The polypeptide is Probable lipase C14C8.15 (Schizosaccharomyces pombe (strain 972 / ATCC 24843) (Fission yeast)).